Consider the following 464-residue polypeptide: Kynureninase (464 aa).

Met1 is subject to N-acetylmethionine. Pyridoxal 5'-phosphate is bound by residues Leu137, Thr138, 165–168 (FPSD), Ser221, Asp250, His253, and Tyr275. The residue at position 276 (Lys276) is an N6-(pyridoxal phosphate)lysine. Positions 305 and 333 each coordinate pyridoxal 5'-phosphate.

This sequence belongs to the kynureninase family. As to quaternary structure, homodimer. The cofactor is pyridoxal 5'-phosphate. As to expression, high levels in liver and kidney. Also detected in heart, retina, ovary. Lung, testis and brain.

The protein localises to the cytoplasm. It localises to the cytosol. It carries out the reaction L-kynurenine + H2O = anthranilate + L-alanine + H(+). The catalysed reaction is 3-hydroxy-L-kynurenine + H2O = 3-hydroxyanthranilate + L-alanine + H(+). Its pathway is amino-acid degradation; L-kynurenine degradation; L-alanine and anthranilate from L-kynurenine: step 1/1. The protein operates within cofactor biosynthesis; NAD(+) biosynthesis; quinolinate from L-kynurenine: step 2/3. Inhibited by o-methylbenzoylalanine (OMBA). Catalyzes the cleavage of L-kynurenine (L-Kyn) and L-3-hydroxykynurenine (L-3OHKyn) into anthranilic acid (AA) and 3-hydroxyanthranilic acid (3-OHAA), respectively. Has a preference for the L-3-hydroxy form. Also has cysteine-conjugate-beta-lyase activity. This is Kynureninase (Kynu) from Rattus norvegicus (Rat).